Here is a 100-residue protein sequence, read N- to C-terminus: Urease subunit gamma (100 aa).

The protein belongs to the urease gamma subunit family. In terms of assembly, heterotrimer of UreA (gamma), UreB (beta) and UreC (alpha) subunits. Three heterotrimers associate to form the active enzyme.

The protein resides in the cytoplasm. It catalyses the reaction urea + 2 H2O + H(+) = hydrogencarbonate + 2 NH4(+). It participates in nitrogen metabolism; urea degradation; CO(2) and NH(3) from urea (urease route): step 1/1. This is Urease subunit gamma from Saccharophagus degradans (strain 2-40 / ATCC 43961 / DSM 17024).